The sequence spans 369 residues: UDP-glucose 4-epimerase 4 (369 aa).

19–50 (TVLVTGGAGYIGSHTVLQLLAAGFRVVVADSL) contributes to the NAD(+) binding site. Ser144 is a substrate binding site. Tyr168 (proton acceptor) is an active-site residue.

This sequence belongs to the NAD(P)-dependent epimerase/dehydratase family. The cofactor is NAD(+).

It catalyses the reaction UDP-alpha-D-glucose = UDP-alpha-D-galactose. It functions in the pathway carbohydrate metabolism; galactose metabolism. Catalyzes the interconversion between UDP-glucose and UDP-galactose. This chain is UDP-glucose 4-epimerase 4 (UGE-4), found in Oryza sativa subsp. japonica (Rice).